Consider the following 566-residue polypeptide: Proline--tRNA ligase 1 (566 aa).

This sequence belongs to the class-II aminoacyl-tRNA synthetase family. ProS type 1 subfamily. As to quaternary structure, homodimer.

Its subcellular location is the cytoplasm. The catalysed reaction is tRNA(Pro) + L-proline + ATP = L-prolyl-tRNA(Pro) + AMP + diphosphate. Functionally, catalyzes the attachment of proline to tRNA(Pro) in a two-step reaction: proline is first activated by ATP to form Pro-AMP and then transferred to the acceptor end of tRNA(Pro). As ProRS can inadvertently accommodate and process non-cognate amino acids such as alanine and cysteine, to avoid such errors it has two additional distinct editing activities against alanine. One activity is designated as 'pretransfer' editing and involves the tRNA(Pro)-independent hydrolysis of activated Ala-AMP. The other activity is designated 'posttransfer' editing and involves deacylation of mischarged Ala-tRNA(Pro). The misacylated Cys-tRNA(Pro) is not edited by ProRS. This chain is Proline--tRNA ligase 1, found in Bacillus cereus (strain ATCC 14579 / DSM 31 / CCUG 7414 / JCM 2152 / NBRC 15305 / NCIMB 9373 / NCTC 2599 / NRRL B-3711).